A 484-amino-acid polypeptide reads, in one-letter code: tRNA-2-methylthio-N(6)-dimethylallyladenosine synthase (484 aa).

The region spanning 29–149 (GVFHIHTLGC…LPKLLDQNRA (121 aa)) is the MTTase N-terminal domain. Positions 38, 78, 112, 186, 190, and 193 each coordinate [4Fe-4S] cluster. Positions 172-401 (RASRISSWVA…VALQEQITEE (230 aa)) constitute a Radical SAM core domain. The region spanning 404 to 474 (ATFEGRDVEV…RHNLLADPDV (71 aa)) is the TRAM domain.

The protein belongs to the methylthiotransferase family. MiaB subfamily. Monomer. [4Fe-4S] cluster serves as cofactor.

It localises to the cytoplasm. The enzyme catalyses N(6)-dimethylallyladenosine(37) in tRNA + (sulfur carrier)-SH + AH2 + 2 S-adenosyl-L-methionine = 2-methylsulfanyl-N(6)-dimethylallyladenosine(37) in tRNA + (sulfur carrier)-H + 5'-deoxyadenosine + L-methionine + A + S-adenosyl-L-homocysteine + 2 H(+). Catalyzes the methylthiolation of N6-(dimethylallyl)adenosine (i(6)A), leading to the formation of 2-methylthio-N6-(dimethylallyl)adenosine (ms(2)i(6)A) at position 37 in tRNAs that read codons beginning with uridine. The protein is tRNA-2-methylthio-N(6)-dimethylallyladenosine synthase of Bifidobacterium longum (strain DJO10A).